A 149-amino-acid chain; its full sequence is Chromophore lyase CpcS/CpeS homolog (149 aa).

Belongs to the CpcS/CpeS biliprotein lyase family.

The protein localises to the plastid. It localises to the chloroplast. Its function is as follows. Might function to covalently attach a chromophore to Cys residue(s) of phycobiliproteins. In Porphyra purpurea (Red seaweed), this protein is Chromophore lyase CpcS/CpeS homolog.